We begin with the raw amino-acid sequence, 453 residues long: GTPase Der (453 aa).

2 consecutive EngA-type G domains span residues 4–169 (PIVA…PPVT) and 177–352 (IKIA…EEHK). GTP is bound by residues 10-17 (GRPNVGKS), 57-61 (DTGGL), 120-123 (NKCE), 183-190 (GRPNVGKS), 230-234 (DTAGI), and 295-298 (NKWD). Residues 353–438 (RRVSTSVINE…PIRLLWRSKK (86 aa)) enclose the KH-like domain.

It belongs to the TRAFAC class TrmE-Era-EngA-EngB-Septin-like GTPase superfamily. EngA (Der) GTPase family. Associates with the 50S ribosomal subunit.

In terms of biological role, GTPase that plays an essential role in the late steps of ribosome biogenesis. The sequence is that of GTPase Der from Nostoc sp. (strain PCC 7120 / SAG 25.82 / UTEX 2576).